Reading from the N-terminus, the 232-residue chain is Large ribosomal subunit protein uL1 (232 aa).

The protein belongs to the universal ribosomal protein uL1 family. In terms of assembly, part of the 50S ribosomal subunit.

Its function is as follows. Binds directly to 23S rRNA. The L1 stalk is quite mobile in the ribosome, and is involved in E site tRNA release. Functionally, protein L1 is also a translational repressor protein, it controls the translation of the L11 operon by binding to its mRNA. This chain is Large ribosomal subunit protein uL1, found in Bartonella bacilliformis (strain ATCC 35685 / KC583 / Herrer 020/F12,63).